An 83-amino-acid polypeptide reads, in one-letter code: Hainantoxin-III 8 (83 aa).

The first 21 residues, 1 to 21 (MKASMFLALAGLVLLFVVGYA), serve as a signal peptide directing secretion. Positions 22 to 48 (SESEEKEFPRELLSKIFAVDDFTGEER) are excised as a propeptide. Intrachain disulfides connect C50–C65, C57–C70, and C64–C77. A Leucine amide modification is found at L81.

It belongs to the neurotoxin 10 (Hwtx-1) family. 15 (Hntx-3) subfamily. In terms of assembly, monomer. Expressed by the venom gland.

Its subcellular location is the secreted. Selective antagonist of neuronal tetrodotoxin (TTX)-sensitive voltage-gated sodium channels (IC(50)=1270 nM on Nav1.1/SCN1A, 270 nM on Nav1.2/SCN2A, 491 nM on Nav1.3/SCN3A and 232 nM on Nav1.7/SCN9A). This toxin suppress Nav1.7 current amplitude without significantly altering the activation, inactivation, and repriming kinetics. Short extreme depolarizations partially activate the toxin-bound channel, indicating voltage-dependent inhibition of this toxin. This toxin increases the deactivation of the Nav1.7 current after extreme depolarizations. The toxin-Nav1.7 complex is gradually dissociated upon prolonged strong depolarizations in a voltage-dependent manner, and the unbound toxin rebinds to Nav1.7 after a long repolarization. Moreover, analysis of chimeric channels showed that the DIIS3-S4 linker is critical for toxin binding to Nav1.7. These data are consistent with this toxin interacting with Nav1.7 site 4 and trapping the domain II voltage sensor in the closed state. This chain is Hainantoxin-III 8, found in Cyriopagopus hainanus (Chinese bird spider).